The primary structure comprises 179 residues: Negative modulator of initiation of replication (179 aa).

The interaction with DNA stretch occupies residues 86–87 (AV).

This sequence belongs to the SeqA family. Homodimer. Polymerizes to form helical filaments.

The protein resides in the cytoplasm. Functionally, negative regulator of replication initiation, which contributes to regulation of DNA replication and ensures that replication initiation occurs exactly once per chromosome per cell cycle. Binds to pairs of hemimethylated GATC sequences in the oriC region, thus preventing assembly of replication proteins and re-initiation at newly replicated origins. Repression is relieved when the region becomes fully methylated. This chain is Negative modulator of initiation of replication, found in Shewanella woodyi (strain ATCC 51908 / MS32).